The chain runs to 201 residues: Potassium-transporting ATPase KdpC subunit (201 aa).

A helical membrane pass occupies residues 7–27 (PALVLLVALTAITGLAYPLAV).

The protein belongs to the KdpC family. As to quaternary structure, the system is composed of three essential subunits: KdpA, KdpB and KdpC.

It is found in the cell inner membrane. In terms of biological role, part of the high-affinity ATP-driven potassium transport (or Kdp) system, which catalyzes the hydrolysis of ATP coupled with the electrogenic transport of potassium into the cytoplasm. This subunit acts as a catalytic chaperone that increases the ATP-binding affinity of the ATP-hydrolyzing subunit KdpB by the formation of a transient KdpB/KdpC/ATP ternary complex. The chain is Potassium-transporting ATPase KdpC subunit from Methylorubrum extorquens (strain CM4 / NCIMB 13688) (Methylobacterium extorquens).